A 410-amino-acid chain; its full sequence is Structure-specific endonuclease subunit SLX1 homolog (410 aa).

The region spanning 6-89 (QLHYCYFLLS…NICKVTRDNI (84 aa)) is the GIY-YIG domain.

Belongs to the SLX1 family. In terms of assembly, forms a heterodimer with a member of the SLX4 family. A divalent metal cation is required as a cofactor.

The protein localises to the nucleus. Functionally, catalytic subunit of a heterodimeric structure-specific endonuclease that resolves DNA secondary structures generated during DNA repair and recombination. Has endonuclease activity towards branched DNA substrates, introducing single-strand cuts in duplex DNA close to junctions with ss-DNA. The chain is Structure-specific endonuclease subunit SLX1 homolog from Cryptosporidium parvum (strain Iowa II).